The sequence spans 134 residues: Ethylmalonyl-CoA/methylmalonyl-CoA epimerase (134 aa).

The 131-residue stretch at 4–134 folds into the VOC domain; the sequence is RLNHVAIAVP…NGCLVELEQV (131 aa). Co(2+)-binding residues include His-7, His-79, and Glu-130. Glu-130 serves as the catalytic Proton donor/acceptor.

This sequence belongs to the methylmalonyl-CoA epimerase family. Requires Co(2+) as cofactor. It depends on Mn(2+) as a cofactor.

It catalyses the reaction (2R)-ethylmalonyl-CoA = (2S)-ethylmalonyl-CoA. It carries out the reaction (R)-methylmalonyl-CoA = (S)-methylmalonyl-CoA. Its function is as follows. Promiscuous isomerase that catalyzes epimerization of both ethylmalonyl-CoA and methylmalonyl-CoA. Has thus a dual role in the ethylmalonyl-CoA pathway for acetyl-CoA assimilation required for R.sphaeroides growth on acetate as sole carbon source. The sequence is that of Ethylmalonyl-CoA/methylmalonyl-CoA epimerase from Cereibacter sphaeroides (strain ATCC 17023 / DSM 158 / JCM 6121 / CCUG 31486 / LMG 2827 / NBRC 12203 / NCIMB 8253 / ATH 2.4.1.) (Rhodobacter sphaeroides).